Reading from the N-terminus, the 296-residue chain is MPYDSVYSEKRPPGTLRTAWRKFYSDASAMVGLYGCAGLAVLCIFGGWFAPYGIDQQFLGYQLLPPSWSRYGEVSFFLGTDDLGRDVLSRLLSGAAPTVGGAFVVTLAATICGLVLGTFAGATHGLRSAVLNHILDTLLAIPSLLLAIIVVAFAGPSLSHAMFAVWLALLPRMVRSIYSMVHDELEKEYVIAARLDGASTLNILWFAVMPNITAGLVTEITRALSMAILDIAALGFLDLGAQLPSPEWGAMLGDALELIYVAPWTVMLPGAAIMISVLLVNLLGDGVRRAIIAGVE.

The Cytoplasmic segment spans residues 1 to 28 (MPYDSVYSEKRPPGTLRTAWRKFYSDAS). Residues 29–49 (AMVGLYGCAGLAVLCIFGGWF) form a helical membrane-spanning segment. At 50 to 98 (APYGIDQQFLGYQLLPPSWSRYGEVSFFLGTDDLGRDVLSRLLSGAAPT) the chain is on the periplasmic side. Residues 99 to 119 (VGGAFVVTLAATICGLVLGTF) traverse the membrane as a helical segment. In terms of domain architecture, ABC transmembrane type-1 spans 99–284 (VGGAFVVTLA…ISVLLVNLLG (186 aa)). Topologically, residues 120-133 (AGATHGLRSAVLNH) are cytoplasmic. Residues 134-154 (ILDTLLAIPSLLLAIIVVAFA) traverse the membrane as a helical segment. At 155 to 196 (GPSLSHAMFAVWLALLPRMVRSIYSMVHDELEKEYVIAARLD) the chain is on the periplasmic side. The chain crosses the membrane as a helical span at residues 197–217 (GASTLNILWFAVMPNITAGLV). Topologically, residues 218-222 (TEITR) are cytoplasmic. Residues 223–243 (ALSMAILDIAALGFLDLGAQL) traverse the membrane as a helical segment. Topologically, residues 244–257 (PSPEWGAMLGDALE) are periplasmic. The chain crosses the membrane as a helical span at residues 258-278 (LIYVAPWTVMLPGAAIMISVL). Over 279 to 296 (LVNLLGDGVRRAIIAGVE) the chain is Cytoplasmic.

Belongs to the binding-protein-dependent transport system permease family. OppBC subfamily.

It is found in the cell inner membrane. In terms of biological role, involved in a peptide intake transport system that plays a role in the resistance to antimicrobial peptides. The protein is Peptide transport system permease protein SapC (sapC) of Escherichia coli O6:H1 (strain CFT073 / ATCC 700928 / UPEC).